The sequence spans 71 residues: DNA-directed RNA polymerase subunit 10-like protein (71 aa).

Residues Cys-7, Cys-10, Cys-44, and Cys-45 each contribute to the Zn(2+) site.

This sequence belongs to the archaeal Rpo10/eukaryotic RPB10 RNA polymerase subunit family. As to quaternary structure, interacts with IYO.

Its subcellular location is the nucleus. In Arabidopsis thaliana (Mouse-ear cress), this protein is DNA-directed RNA polymerase subunit 10-like protein.